A 147-amino-acid chain; its full sequence is D-aminoacyl-tRNA deacylase (147 aa).

The short motif at 136–137 is the Gly-cisPro motif, important for rejection of L-amino acids element; it reads GP.

The protein belongs to the DTD family. Homodimer.

The protein localises to the cytoplasm. It carries out the reaction glycyl-tRNA(Ala) + H2O = tRNA(Ala) + glycine + H(+). It catalyses the reaction a D-aminoacyl-tRNA + H2O = a tRNA + a D-alpha-amino acid + H(+). Its function is as follows. An aminoacyl-tRNA editing enzyme that deacylates mischarged D-aminoacyl-tRNAs. Also deacylates mischarged glycyl-tRNA(Ala), protecting cells against glycine mischarging by AlaRS. Acts via tRNA-based rather than protein-based catalysis; rejects L-amino acids rather than detecting D-amino acids in the active site. By recycling D-aminoacyl-tRNA to D-amino acids and free tRNA molecules, this enzyme counteracts the toxicity associated with the formation of D-aminoacyl-tRNA entities in vivo and helps enforce protein L-homochirality. This chain is D-aminoacyl-tRNA deacylase, found in Streptococcus thermophilus (strain CNRZ 1066).